The chain runs to 269 residues: Zinc transporter ZupT (269 aa).

8 helical membrane passes run 5–25 (VLLAFGLTLFAGLATGVGSLI), 38–58 (SLALGFSAGVMIYVSLVEIFV), 75–95 (WMTIAGFFGGMLFIALIDKFI), 125–145 (MGIFTALAIGIHNFPEGIATF), 158–178 (IAIAVAIHNIPEGIAVSVPIF), 190–210 (LSFLSGLAEPVGALVAFLLLM), 212–232 (FLTDVMFGIIFAGVAGIMVFI), and 249–269 (LSMYGLVGGMAVMAISLVLLV). Fe(2+) contacts are provided by Asn-137 and Glu-140. Glu-140 and His-165 together coordinate Zn(2+). Fe(2+) is bound by residues Asn-166, Glu-169, and Glu-198. Residue Glu-169 coordinates Zn(2+).

This sequence belongs to the ZIP transporter (TC 2.A.5) family. ZupT subfamily.

It is found in the cell membrane. The catalysed reaction is Zn(2+)(in) = Zn(2+)(out). Its function is as follows. Mediates zinc uptake. May also transport other divalent cations. This Lysinibacillus sphaericus (strain C3-41) protein is Zinc transporter ZupT.